The chain runs to 241 residues: Probable transcriptional regulatory protein SAR11_0592 (241 aa).

The interval 1 to 24 is disordered; sequence MSGHSKWASIKHSKGKADKQRSKV.

The protein belongs to the TACO1 family.

It is found in the cytoplasm. The chain is Probable transcriptional regulatory protein SAR11_0592 from Pelagibacter ubique (strain HTCC1062).